The following is a 466-amino-acid chain: Glutamate decarboxylase alpha (466 aa).

Threonine 62 and asparagine 83 together coordinate substrate. Pyridoxal 5'-phosphate is bound by residues 126-127, threonine 212, and histidine 275; that span reads SS. An N6-(pyridoxal phosphate)lysine modification is found at lysine 276.

Belongs to the group II decarboxylase family. Homohexamer. Requires pyridoxal 5'-phosphate as cofactor.

The catalysed reaction is L-glutamate + H(+) = 4-aminobutanoate + CO2. Functionally, converts glutamate to gamma-aminobutyrate (GABA), consuming one intracellular proton in the reaction. The gad system helps to maintain a near-neutral intracellular pH when cells are exposed to extremely acidic conditions. The ability to survive transit through the acidic conditions of the stomach is essential for successful colonization of the mammalian host by commensal and pathogenic bacteria. This chain is Glutamate decarboxylase alpha (gadA), found in Escherichia coli O6:H1 (strain CFT073 / ATCC 700928 / UPEC).